Here is a 256-residue protein sequence, read N- to C-terminus: Hypodermin-B (256 aa).

The signal sequence occupies residues 1-22; it reads MLKFVILVCSVACVFGAVVPGG. Residues 23–30 constitute a propeptide, activation peptide; sequence MLPQLDGR. The region spanning 31–254 is the Peptidase S1 domain; sequence IVGGFEADIE…VRSWITENAK (224 aa). A disulfide bridge connects residues cysteine 56 and cysteine 72. Active-site charge relay system residues include histidine 71 and aspartate 116. 2 cysteine pairs are disulfide-bonded: cysteine 180–cysteine 197 and cysteine 206–cysteine 230. Serine 210 acts as the Charge relay system in catalysis.

The protein belongs to the peptidase S1 family.

Its subcellular location is the secreted. Functionally, protease that shows preferential cleavage after Arg and Lys residues. This chain is Hypodermin-B, found in Hypoderma lineatum (Early cattle grub).